We begin with the raw amino-acid sequence, 291 residues long: Protease HtpX homolog (291 aa).

Transmembrane regions (helical) follow at residues 4 to 24 (VVLF…SARV) and 38 to 58 (MGML…ISLL). Residue histidine 144 participates in Zn(2+) binding. The active site involves glutamate 145. Histidine 148 is a binding site for Zn(2+). Transmembrane regions (helical) follow at residues 159 to 179 (LIQG…AYAI) and 199 to 219 (ISSI…VMYF). Glutamate 224 provides a ligand contact to Zn(2+).

The protein belongs to the peptidase M48B family. The cofactor is Zn(2+).

The protein localises to the cell inner membrane. The chain is Protease HtpX homolog from Chlorobium phaeobacteroides (strain DSM 266 / SMG 266 / 2430).